Consider the following 588-residue polypeptide: 2-succinyl-5-enolpyruvyl-6-hydroxy-3-cyclohexene-1-carboxylate synthase (588 aa).

Belongs to the TPP enzyme family. MenD subfamily. As to quaternary structure, homodimer. The cofactor is Mg(2+). Mn(2+) serves as cofactor. Requires thiamine diphosphate as cofactor.

The catalysed reaction is isochorismate + 2-oxoglutarate + H(+) = 5-enolpyruvoyl-6-hydroxy-2-succinyl-cyclohex-3-ene-1-carboxylate + CO2. It functions in the pathway quinol/quinone metabolism; 1,4-dihydroxy-2-naphthoate biosynthesis; 1,4-dihydroxy-2-naphthoate from chorismate: step 2/7. The protein operates within cofactor biosynthesis; phylloquinone biosynthesis. Catalyzes the thiamine diphosphate-dependent decarboxylation of 2-oxoglutarate and the subsequent addition of the resulting succinic semialdehyde-thiamine pyrophosphate anion to isochorismate to yield 2-succinyl-5-enolpyruvyl-6-hydroxy-3-cyclohexene-1-carboxylate (SEPHCHC). This is 2-succinyl-5-enolpyruvyl-6-hydroxy-3-cyclohexene-1-carboxylate synthase from Prochlorococcus marinus (strain MIT 9515).